The chain runs to 414 residues: Enolase (414 aa).

Q162 contributes to the (2R)-2-phosphoglycerate binding site. E204 acts as the Proton donor in catalysis. Positions 239, 280, and 307 each coordinate Mg(2+). K332, R361, S362, and K383 together coordinate (2R)-2-phosphoglycerate. The active-site Proton acceptor is K332.

This sequence belongs to the enolase family. The cofactor is Mg(2+).

The protein localises to the cytoplasm. It is found in the secreted. Its subcellular location is the cell surface. The catalysed reaction is (2R)-2-phosphoglycerate = phosphoenolpyruvate + H2O. The protein operates within carbohydrate degradation; glycolysis; pyruvate from D-glyceraldehyde 3-phosphate: step 4/5. In terms of biological role, catalyzes the reversible conversion of 2-phosphoglycerate (2-PG) into phosphoenolpyruvate (PEP). It is essential for the degradation of carbohydrates via glycolysis. This is Enolase from Campylobacter jejuni (strain RM1221).